Reading from the N-terminus, the 543-residue chain is Chaperonin GroEL (543 aa).

ATP contacts are provided by residues 30-33 (TLGP), lysine 51, 87-91 (DGTTT), glycine 415, and aspartate 496.

The protein belongs to the chaperonin (HSP60) family. In terms of assembly, forms a cylinder of 14 subunits composed of two heptameric rings stacked back-to-back. Interacts with the co-chaperonin GroES.

It localises to the cytoplasm. It catalyses the reaction ATP + H2O + a folded polypeptide = ADP + phosphate + an unfolded polypeptide.. Together with its co-chaperonin GroES, plays an essential role in assisting protein folding. The GroEL-GroES system forms a nano-cage that allows encapsulation of the non-native substrate proteins and provides a physical environment optimized to promote and accelerate protein folding. In Gluconobacter oxydans (strain 621H) (Gluconobacter suboxydans), this protein is Chaperonin GroEL.